Reading from the N-terminus, the 131-residue chain is MVMTDPIADMLTRIRNANIVRHEVVEVPSSNVKKSIANILVQEGYVKDIEEYADGAVPMIRLSLKYNGKERIITGLKRISKPGLRVYCKKDNIPKVLNGLGVAIISTSKGIVTDREARKLGLGGEVICYVW.

Belongs to the universal ribosomal protein uS8 family. In terms of assembly, part of the 30S ribosomal subunit. Contacts proteins S5 and S12.

Functionally, one of the primary rRNA binding proteins, it binds directly to 16S rRNA central domain where it helps coordinate assembly of the platform of the 30S subunit. The chain is Small ribosomal subunit protein uS8 from Clostridium novyi (strain NT).